The primary structure comprises 309 residues: Zinc finger protein-like 1 homolog (309 aa).

A B box-type; degenerate zinc finger spans residues M1–W43. The RING-type; atypical zinc-finger motif lies at C53–S101. Residues G200–N221 are disordered. Residues K254–M274 traverse the membrane as a helical segment.

Belongs to the ZFPL1 family.

It is found in the membrane. This is Zinc finger protein-like 1 homolog from Caenorhabditis elegans.